Reading from the N-terminus, the 76-residue chain is Frizzled-3 (76 aa).

The Cytoplasmic segment spans residues 1–5; the sequence is YPERP. The chain crosses the membrane as a helical span at residues 6–26; the sequence is IIFYAVCYMMVSLIFFIGFLL. Topologically, residues 27–54 are extracellular; that stretch reads EDRVACNASSPAQYKASTVTQGSHNKAC. An N-linked (GlcNAc...) asparagine glycan is attached at Asn-33. Residues 55-75 form a helical membrane-spanning segment; the sequence is TMLFMVLYFFTMAGSVWWVIL. Arg-76 is a topological domain (cytoplasmic).

This sequence belongs to the G-protein coupled receptor Fz/Smo family.

It localises to the membrane. Its subcellular location is the cell membrane. It is found in the cell surface. The protein resides in the apical cell membrane. Receptor for Wnt proteins. Most of frizzled receptors are coupled to the beta-catenin canonical signaling pathway, which leads to the activation of disheveled proteins, inhibition of GSK-3 kinase, nuclear accumulation of beta-catenin and activation of Wnt target genes. A second signaling pathway involving PKC and calcium fluxes has been seen for some family members, but it is not yet clear if it represents a distinct pathway or if it can be integrated in the canonical pathway, as PKC seems to be required for Wnt-mediated inactivation of GSK-3 kinase. Both pathways seem to involve interactions with G-proteins. May be involved in transduction and intercellular transmission of polarity information during tissue morphogenesis and/or in differentiated tissues. Plays a role in controlling early axon growth and guidance processes necessary for the formation of a subset of central and peripheral major fiber tracts. Involved in the migration of cranial neural crest cells. May also be implicated in the transmission of sensory information from the trunk and limbs to the brain. Controls commissural sensory axons guidance after midline crossing along the anterior-posterior axis in the developing spinal cord in a Wnt-dependent signaling pathway. Together with FZD6, is involved in the neural tube closure and plays a role in the regulation of the establishment of planar cell polarity (PCP). Promotes neurogenesis by maintaining sympathetic neuroblasts within the cell cycle in a beta-catenin-dependent manner. This is Frizzled-3 (FZD3) from Gallus gallus (Chicken).